A 380-amino-acid polypeptide reads, in one-letter code: Cytochrome b (380 aa).

4 helical membrane-spanning segments follow: residues Phe34–Met54, Trp78–Ile99, Trp114–Leu134, and Phe179–Thr199. Heme b is bound by residues His84 and His98. The heme b site is built by His183 and His197. His202 is an a ubiquinone binding site. 4 helical membrane passes run Leu227–Ser247, Leu289–His309, Leu321–Ser341, and Phe348–Pro368.

It belongs to the cytochrome b family. The cytochrome bc1 complex contains 11 subunits: 3 respiratory subunits (MT-CYB, CYC1 and UQCRFS1), 2 core proteins (UQCRC1 and UQCRC2) and 6 low-molecular weight proteins (UQCRH/QCR6, UQCRB/QCR7, UQCRQ/QCR8, UQCR10/QCR9, UQCR11/QCR10 and a cleavage product of UQCRFS1). This cytochrome bc1 complex then forms a dimer. It depends on heme b as a cofactor.

It is found in the mitochondrion inner membrane. Functionally, component of the ubiquinol-cytochrome c reductase complex (complex III or cytochrome b-c1 complex) that is part of the mitochondrial respiratory chain. The b-c1 complex mediates electron transfer from ubiquinol to cytochrome c. Contributes to the generation of a proton gradient across the mitochondrial membrane that is then used for ATP synthesis. The sequence is that of Cytochrome b (MT-CYB) from Oceanodroma tethys (Wedge-rumped storm-petrel).